Here is a 391-residue protein sequence, read N- to C-terminus: F-box protein At2g34280 (391 aa).

In terms of domain architecture, F-box spans methionine 1–arginine 43.

This is F-box protein At2g34280 from Arabidopsis thaliana (Mouse-ear cress).